The following is a 201-amino-acid chain: UPF0301 protein RHE_CH00966 (201 aa).

This sequence belongs to the UPF0301 (AlgH) family.

The protein is UPF0301 protein RHE_CH00966 of Rhizobium etli (strain ATCC 51251 / DSM 11541 / JCM 21823 / NBRC 15573 / CFN 42).